Consider the following 232-residue polypeptide: Ribonuclease 3 (232 aa).

Positions 5–134 constitute an RNase III domain; the sequence is QTVLKNHFAI…FLGALLLDKD (130 aa). Mg(2+) is bound at residue Glu-47. Asp-51 is an active-site residue. Residues Asp-120 and Glu-123 each coordinate Mg(2+). Glu-123 is a catalytic residue. A DRBM domain is found at 160–229; that stretch reads DYKTHLQELL…AKNAVEKGLD (70 aa).

It belongs to the ribonuclease III family. Homodimer. Mg(2+) is required as a cofactor.

The protein localises to the cytoplasm. It carries out the reaction Endonucleolytic cleavage to 5'-phosphomonoester.. Its function is as follows. Digests double-stranded RNA. Involved in the processing of primary rRNA transcript to yield the immediate precursors to the large and small rRNAs (23S and 16S). Processes some mRNAs, and tRNAs when they are encoded in the rRNA operon. Processes pre-crRNA and tracrRNA of type II CRISPR loci if present in the organism. In Streptococcus pneumoniae (strain P1031), this protein is Ribonuclease 3.